Here is a 255-residue protein sequence, read N- to C-terminus: Electron transfer flavoprotein beta subunit lysine methyltransferase (255 aa).

The transit peptide at 1-32 (MAFSLCWKAPRSQWSFLQALNSGFPLFPWRTV) directs the protein to the mitochondrion.

Belongs to the methyltransferase superfamily. ETFBKMT family. Interacts with HSPD1; this protein may possibly be a methylation substrate.

The protein resides in the cytoplasm. Its subcellular location is the mitochondrion matrix. It carries out the reaction L-lysyl-[protein] + 3 S-adenosyl-L-methionine = N(6),N(6),N(6)-trimethyl-L-lysyl-[protein] + 3 S-adenosyl-L-homocysteine + 3 H(+). In terms of biological role, protein-lysine methyltransferase that selectively trimethylates the flavoprotein ETFB in mitochondria. Thereby, may negatively regulate the function of ETFB in electron transfer from Acyl-CoA dehydrogenases to the main respiratory chain. The chain is Electron transfer flavoprotein beta subunit lysine methyltransferase from Rattus norvegicus (Rat).